The sequence spans 546 residues: Tryptophan biosynthesis protein TrpCD (546 aa).

Positions methionine 1–lysine 226 are indole-3-glycerol phosphate synthase. Residues methionine 227–methionine 546 form an anthranilate phosphoribosyltransferase region. 5-phospho-alpha-D-ribose 1-diphosphate is bound by residues glycine 295, glycine 298–aspartate 299, serine 303, asparagine 305–threonine 308, lysine 322–serine 330, and serine 334. Glycine 295 is a binding site for anthranilate. Serine 307 lines the Mg(2+) pocket. Residue asparagine 325 coordinates anthranilate. Arginine 380 serves as a coordination point for anthranilate. Mg(2+)-binding residues include aspartate 437 and glutamate 438.

The protein in the N-terminal section; belongs to the TrpC family. In the C-terminal section; belongs to the anthranilate phosphoribosyltransferase family. Mg(2+) is required as a cofactor.

The catalysed reaction is 1-(2-carboxyphenylamino)-1-deoxy-D-ribulose 5-phosphate + H(+) = (1S,2R)-1-C-(indol-3-yl)glycerol 3-phosphate + CO2 + H2O. It catalyses the reaction N-(5-phospho-beta-D-ribosyl)anthranilate + diphosphate = 5-phospho-alpha-D-ribose 1-diphosphate + anthranilate. Its pathway is amino-acid biosynthesis; L-tryptophan biosynthesis; L-tryptophan from chorismate: step 2/5. It participates in amino-acid biosynthesis; L-tryptophan biosynthesis; L-tryptophan from chorismate: step 4/5. Functionally, bifunctional enzyme that catalyzes the second and fourth steps of tryptophan biosynthetic pathway. The second step is catalyzed by the anthranilate phosphoribosyltransferase, coded by the TrpD domain and the fourth step is catalyzed by indole-3-glycerol phosphate synthase, coded by the TrpC domain. In Archaeoglobus fulgidus (strain ATCC 49558 / DSM 4304 / JCM 9628 / NBRC 100126 / VC-16), this protein is Tryptophan biosynthesis protein TrpCD (trpCD).